The following is a 197-amino-acid chain: Protein shisa-4 (197 aa).

The N-terminal stretch at 1-27 (MPPAGPRGTAPLAAVVLLVLGAPLALA) is a signal peptide. Over 28 to 87 (SEDCLWYLDRNGSWHPGFDCEFFTFCCGTCYQRYCCRDLTLLITERQQKHCLAFSPKTIA) the chain is Extracellular. A helical transmembrane segment spans residues 88 to 108 (GIASAVILFVAVVATTICCFL). The Cytoplasmic portion of the chain corresponds to 109–197 (CSCCYLYRRR…MPPQPSYPGA (89 aa)).

This sequence belongs to the shisa family.

It is found in the membrane. In Mus musculus (Mouse), this protein is Protein shisa-4 (Shisa4).